A 482-amino-acid polypeptide reads, in one-letter code: tRNA sulfurtransferase (482 aa).

Residues 61 to 165 (PAIRDALTRI…NDRLLLVKGR (105 aa)) form the THUMP domain. ATP-binding positions include 183–184 (LI), Lys265, Gly287, and Gln296. A disulfide bridge connects residues Cys344 and Cys456. A Rhodanese domain is found at 404-482 (FGANDAILDI…GFSNVKVYRP (79 aa)). The active-site Cysteine persulfide intermediate is Cys456.

The protein belongs to the ThiI family.

It localises to the cytoplasm. The enzyme catalyses [ThiI sulfur-carrier protein]-S-sulfanyl-L-cysteine + a uridine in tRNA + 2 reduced [2Fe-2S]-[ferredoxin] + ATP + H(+) = [ThiI sulfur-carrier protein]-L-cysteine + a 4-thiouridine in tRNA + 2 oxidized [2Fe-2S]-[ferredoxin] + AMP + diphosphate. The catalysed reaction is [ThiS sulfur-carrier protein]-C-terminal Gly-Gly-AMP + S-sulfanyl-L-cysteinyl-[cysteine desulfurase] + AH2 = [ThiS sulfur-carrier protein]-C-terminal-Gly-aminoethanethioate + L-cysteinyl-[cysteine desulfurase] + A + AMP + 2 H(+). Its pathway is cofactor biosynthesis; thiamine diphosphate biosynthesis. In terms of biological role, catalyzes the ATP-dependent transfer of a sulfur to tRNA to produce 4-thiouridine in position 8 of tRNAs, which functions as a near-UV photosensor. Also catalyzes the transfer of sulfur to the sulfur carrier protein ThiS, forming ThiS-thiocarboxylate. This is a step in the synthesis of thiazole, in the thiamine biosynthesis pathway. The sulfur is donated as persulfide by IscS. This Klebsiella pneumoniae (strain 342) protein is tRNA sulfurtransferase.